We begin with the raw amino-acid sequence, 350 residues long: Mitogen-activated protein kinase HOG1 (350 aa).

The region spanning 20–299 (YTDLQPVGMG…AAQALAHEYL (280 aa)) is the Protein kinase domain. Residues 26-34 (VGMGAFGLV) and Lys-49 each bind ATP. Residue Asp-141 is the Proton acceptor of the active site. The short motif at 171–173 (TGY) is the TXY element.

It belongs to the protein kinase superfamily. Ser/Thr protein kinase family. MAP kinase subfamily. HOG1 sub-subfamily. It depends on Mg(2+) as a cofactor.

It localises to the cytoplasm. Its subcellular location is the nucleus. The catalysed reaction is L-seryl-[protein] + ATP = O-phospho-L-seryl-[protein] + ADP + H(+). The enzyme catalyses L-threonyl-[protein] + ATP = O-phospho-L-threonyl-[protein] + ADP + H(+). Proline-directed serine/threonine-protein kinase involved in a signal transduction pathway that is activated by changes in the osmolarity of the extracellular environment. Controls osmotic regulation of transcription of target genes. Involved in environmental stress response. Via the downstream MSN2 transcription factor, may play roles in the regulation of growth, conidiation, trap development, fatty acid metabolism and secondary metabolites biosynthesis. The chain is Mitogen-activated protein kinase HOG1 from Arthrobotrys oligospora (strain ATCC 24927 / CBS 115.81 / DSM 1491) (Nematode-trapping fungus).